The sequence spans 188 residues: uncharacterized protein (188 aa).

This is an uncharacterized protein from Autographa californica nuclear polyhedrosis virus (AcMNPV).